Consider the following 110-residue polypeptide: UPF0102 protein HH_1751 (110 aa).

The protein belongs to the UPF0102 family.

In Helicobacter hepaticus (strain ATCC 51449 / 3B1), this protein is UPF0102 protein HH_1751.